A 538-amino-acid chain; its full sequence is Cytochrome P450 monooxygenase astC (538 aa).

Residues 18–38 traverse the membrane as a helical segment; sequence ALMLPALVGCALLIYRAFFAI. Cysteine 481 contributes to the heme binding site.

It belongs to the cytochrome P450 family. Heme is required as a cofactor.

The protein localises to the membrane. The protein operates within secondary metabolite biosynthesis; terpenoid biosynthesis. Its function is as follows. Cytochrome P450 monooxygenase; part of the gene cluster that mediates the biosynthesis of the sesquiterpenoid aspterric acid (AA), an inhibitor of dihydroxy-acid dehydratase (DHAD) effective as an herbicide. AstC catalyzes the third and last step within the pathway and converts the alpha-epoxy carboxylate intermediate produced by the cytochrome P450 monooxygenase astC from (-)daucane into the tricyclic aspterric acid. This Aspergillus terreus (strain NIH 2624 / FGSC A1156) protein is Cytochrome P450 monooxygenase astC.